Here is a 360-residue protein sequence, read N- to C-terminus: Phospho-N-acetylmuramoyl-pentapeptide-transferase (360 aa).

Over 1–25 (MLVWLAEHLVKYYSGFNVFSYLTFR) the chain is Periplasmic. A helical membrane pass occupies residues 26–46 (AIVSLLTALFISLWMGPRMIA). At 47–71 (RLQKLSFGQVVRNDGPESHFSKRGT) the chain is on the cytoplasmic side. A helical transmembrane segment spans residues 72-92 (PTMGGIMILTAIVISVLLWAY). Residue Pro-93 is a topological domain, periplasmic. Residues 94–114 (SNPYVWCVLVVLIGYGIIGFV) traverse the membrane as a helical segment. Residues 115 to 131 (DDYHKVVRKDTKGLIAR) are Cytoplasmic-facing. The helical transmembrane segment at 132-152 (WKYFWMSVIALGVAFALYLVG) threads the bilayer. Residues 153-167 (KDTPATQLVVPFFKD) are Periplasmic-facing. Residues 168 to 188 (VMPQLGLFYILLSYFVIVGTG) form a helical membrane-spanning segment. Over 189–198 (NAVNLTDGLD) the chain is Cytoplasmic. The helical transmembrane segment at 199–219 (GLAIMPTVFVAAGFALVAWAT) threads the bilayer. Topologically, residues 220–235 (GNMNFANYLHIPYLRY) are periplasmic. The helical transmembrane segment at 236-256 (AGELVIVCTAIVGAGLGFLWF) threads the bilayer. Residues 257 to 262 (NTYPAQ) are Cytoplasmic-facing. A helical membrane pass occupies residues 263 to 283 (VFMGDVGSLALGGALGIIAVL). The Periplasmic portion of the chain corresponds to 284-287 (LRQE). A helical membrane pass occupies residues 288-308 (FLLVIMGGVFVVETLSVILQV). Topologically, residues 309-337 (GSFKLRGQRIFRMAPIHHHYELKGWPEPR) are cytoplasmic. The chain crosses the membrane as a helical span at residues 338–358 (VIVRFWIISLMLVLIGLATLK). The Periplasmic portion of the chain corresponds to 359–360 (VR).

This sequence belongs to the glycosyltransferase 4 family. MraY subfamily. It depends on Mg(2+) as a cofactor.

It is found in the cell inner membrane. It carries out the reaction UDP-N-acetyl-alpha-D-muramoyl-L-alanyl-gamma-D-glutamyl-meso-2,6-diaminopimeloyl-D-alanyl-D-alanine + di-trans,octa-cis-undecaprenyl phosphate = di-trans,octa-cis-undecaprenyl diphospho-N-acetyl-alpha-D-muramoyl-L-alanyl-D-glutamyl-meso-2,6-diaminopimeloyl-D-alanyl-D-alanine + UMP. The protein operates within cell wall biogenesis; peptidoglycan biosynthesis. Its function is as follows. Catalyzes the initial step of the lipid cycle reactions in the biosynthesis of the cell wall peptidoglycan: transfers peptidoglycan precursor phospho-MurNAc-pentapeptide from UDP-MurNAc-pentapeptide onto the lipid carrier undecaprenyl phosphate, yielding undecaprenyl-pyrophosphoryl-MurNAc-pentapeptide, known as lipid I. This chain is Phospho-N-acetylmuramoyl-pentapeptide-transferase, found in Salmonella paratyphi A (strain ATCC 9150 / SARB42).